We begin with the raw amino-acid sequence, 321 residues long: Peroxidase 27 (321 aa).

Residues 1–23 form the signal peptide; that stretch reads MAASKRLVVSCLFLVLLFAQANS. Intrachain disulfides connect cysteine 35/cysteine 113, cysteine 68/cysteine 73, cysteine 119/cysteine 317, and cysteine 196/cysteine 228. Histidine 66 acts as the Proton acceptor in catalysis. Residues aspartate 67, valine 70, glycine 72, aspartate 74, and serine 76 each coordinate Ca(2+). A substrate-binding site is contributed by proline 159. Asparagine 164 carries an N-linked (GlcNAc...) asparagine glycan. A heme b-binding site is contributed by histidine 189. A Ca(2+)-binding site is contributed by threonine 190. Residue asparagine 205 is glycosylated (N-linked (GlcNAc...) asparagine). Positions 240, 243, and 248 each coordinate Ca(2+).

This sequence belongs to the peroxidase family. Classical plant (class III) peroxidase subfamily. Heme b serves as cofactor. Requires Ca(2+) as cofactor. Expressed in the whole plant, but preferentially in roots and flowers.

It localises to the secreted. It carries out the reaction 2 a phenolic donor + H2O2 = 2 a phenolic radical donor + 2 H2O. Its function is as follows. Removal of H(2)O(2), oxidation of toxic reductants, biosynthesis and degradation of lignin, suberization, auxin catabolism, response to environmental stresses such as wounding, pathogen attack and oxidative stress. These functions might be dependent on each isozyme/isoform in each plant tissue. This is Peroxidase 27 (PER27) from Arabidopsis thaliana (Mouse-ear cress).